The chain runs to 351 residues: S-adenosylmethionine:tRNA ribosyltransferase-isomerase (351 aa).

The protein belongs to the QueA family. As to quaternary structure, monomer.

The protein resides in the cytoplasm. The catalysed reaction is 7-aminomethyl-7-carbaguanosine(34) in tRNA + S-adenosyl-L-methionine = epoxyqueuosine(34) in tRNA + adenine + L-methionine + 2 H(+). Its pathway is tRNA modification; tRNA-queuosine biosynthesis. Transfers and isomerizes the ribose moiety from AdoMet to the 7-aminomethyl group of 7-deazaguanine (preQ1-tRNA) to give epoxyqueuosine (oQ-tRNA). The polypeptide is S-adenosylmethionine:tRNA ribosyltransferase-isomerase (Hahella chejuensis (strain KCTC 2396)).